Consider the following 317-residue polypeptide: 17-beta-hydroxysteroid dehydrogenase type 6 (317 aa).

The N-terminal stretch at 1–17 (MWFYLVTLVGLYYLLRW) is a signal peptide. An NAD(+)-binding site is contributed by 33 to 57 (FITGCDSGFGNLLARQLDRRGMRVL). A glycan (N-linked (GlcNAc...) asparagine) is linked at Asn161. Ser164 serves as a coordination point for substrate. The active-site Proton acceptor is Tyr176.

This sequence belongs to the short-chain dehydrogenases/reductases (SDR) family. As to expression, detected in prostate, liver and kidney.

It localises to the microsome membrane. The protein resides in the endoplasmic reticulum membrane. It carries out the reaction all-trans-retinol--[retinol-binding protein] + NAD(+) = all-trans-retinal--[retinol-binding protein] + NADH + H(+). It catalyses the reaction all-trans-retinol + NAD(+) = all-trans-retinal + NADH + H(+). The catalysed reaction is androsterone + NAD(+) = 5alpha-androstan-3,17-dione + NADH + H(+). The enzyme catalyses testosterone + NAD(+) = androst-4-ene-3,17-dione + NADH + H(+). It carries out the reaction 5alpha-androstane-3alpha,17beta-diol + NAD(+) = 17beta-hydroxy-5alpha-androstan-3-one + NADH + H(+). It catalyses the reaction 17beta-estradiol + NAD(+) = estrone + NADH + H(+). The catalysed reaction is 17beta-estradiol + NADP(+) = estrone + NADPH + H(+). The enzyme catalyses 3alpha-hydroxy-5alpha-pregnan-20-one + NAD(+) = 5alpha-pregnane-3,20-dione + NADH + H(+). It carries out the reaction 5alpha-androstane-3beta,17beta-diol + NAD(+) = 17beta-hydroxy-5alpha-androstan-3-one + NADH + H(+). It catalyses the reaction 3beta-hydroxy-5alpha-androstan-17-one + NAD(+) = 5alpha-androstan-3,17-dione + NADH + H(+). With respect to regulation, competitively inhibited by 9-cis-retinoic acid and 13-cis-retinoic acid. Functionally, NAD-dependent oxidoreductase with broad substrate specificity that shows both oxidative and reductive activity (in vitro). Has retinol dehydrogenase activity towards all-trans-retinol (in vitro). Has 17-beta-hydroxysteroid dehydrogenase activity towards various steroids (in vitro). Converts 5-alpha-androstan-3-alpha,17-beta-diol to androsterone and estradiol to estrone (in vitro). Has 3-alpha-hydroxysteroid dehydrogenase activity towards androsterone (in vitro). The protein is 17-beta-hydroxysteroid dehydrogenase type 6 (Hsd17b6) of Rattus norvegicus (Rat).